Reading from the N-terminus, the 610-residue chain is Pyruvate decarboxylase 1 (610 aa).

Substrate-binding residues include Asp72 and His159. Residues 437-519 (DSWFNCQKLR…FLINNGGYTI (83 aa)) form a thiamine pyrophosphate binding region. 3 residues coordinate Mg(2+): Asp487, Asn514, and Gly516. Glu520 serves as a coordination point for substrate.

It belongs to the TPP enzyme family. Homotetramer. A metal cation serves as cofactor. It depends on thiamine diphosphate as a cofactor.

It carries out the reaction a 2-oxocarboxylate + H(+) = an aldehyde + CO2. The sequence is that of Pyruvate decarboxylase 1 (PDC1) from Zea mays (Maize).